The chain runs to 280 residues: NAD(+) hydrolase TirS (280 aa).

Residues 22 to 94 (MNKLPDEIDR…KINLQKEQSR (73 aa)) are a coiled coil. The 135-residue stretch at 141–275 (IEYDVFLSHS…EIVEKIYQVI (135 aa)) folds into the TIR domain. Residues 150–151 (SS) and glutamate 180 each bind NAD(+). The active site involves glutamate 216.

It is found in the secreted. It carries out the reaction NAD(+) + H2O = ADP-D-ribose + nicotinamide + H(+). It catalyses the reaction NADP(+) + H2O = ADP-D-ribose 2'-phosphate + nicotinamide + H(+). In terms of biological role, virulence factor that suppresses host Toll-like receptor 2 (TLR2)-mediated NF-kappa-B signaling upon infection. NAD(+) hydrolase (NADase) that catalyzes cleavage of NAD(+) into ADP-D-ribose (ADPR) and nicotinamide. Also able to hydrolyze NADP(+), but not other NAD(+)-related molecules. Able to reduce NAD(+) levels in host cells. The protein is NAD(+) hydrolase TirS of Staphylococcus aureus (strain MSSA476).